Consider the following 183-residue polypeptide: Oleosin-B2 (183 aa).

A polar region spans residues 1-23; sequence QASIFSRFFRMFSFIFPFVNVIK. Helical transmembrane passes span 24-44, 46-66, and 72-92; these read LIIA…ALGG, AVAL…LVPA, and LLAS…GLIM. Residues 24–95 are hydrophobic; it reads LIIASVTSLV…TGIGLIMGLV (72 aa).

It belongs to the oleosin family. In terms of tissue distribution, the full-length protein is found in the tapetal lipid bodies of immature anthers, the proteolytically cleaved C-terminal product is found on the coats of pollen grains. Not present in seeds.

Its subcellular location is the lipid droplet. The protein resides in the membrane. Its function is as follows. Many of the major pollen coat proteins are derived from endoproteolytic cleavage of oleosin-like proteins. This Brassica napus (Rape) protein is Oleosin-B2 (OlnB2).